The following is a 99-amino-acid chain: Large ribosomal subunit protein eL42 (99 aa).

It belongs to the eukaryotic ribosomal protein eL42 family.

This is Large ribosomal subunit protein eL42 (RPL44) from Chlamydomonas reinhardtii (Chlamydomonas smithii).